Reading from the N-terminus, the 202-residue chain is Imidazoleglycerol-phosphate dehydratase (202 aa).

Belongs to the imidazoleglycerol-phosphate dehydratase family.

Its subcellular location is the cytoplasm. The catalysed reaction is D-erythro-1-(imidazol-4-yl)glycerol 3-phosphate = 3-(imidazol-4-yl)-2-oxopropyl phosphate + H2O. Its pathway is amino-acid biosynthesis; L-histidine biosynthesis; L-histidine from 5-phospho-alpha-D-ribose 1-diphosphate: step 6/9. The protein is Imidazoleglycerol-phosphate dehydratase of Chelativorans sp. (strain BNC1).